Here is a 1216-residue protein sequence, read N- to C-terminus: Metabotropic glycine receptor (1216 aa).

An N-terminal signal peptide occupies residues 1–23 (MGVMAYPFLFCLLLVHFGLGAIG). The Extracellular segment spans residues 24 to 417 (ASREAPSRPD…CFVQEDKYLR (394 aa)). The interval 25 to 65 (SREAPSRPDPPRERTLRAKQHAQQPARASASDPSAPWSRST) is disordered. Basic and acidic residues predominate over residues 28–40 (APSRPDPPRERTL). A compositionally biased stretch (low complexity) spans 46-64 (AQQPARASASDPSAPWSRS). Positions 85-281 (YLYTGDSHKL…CENGSYKPGW (197 aa)) are cache-like region. Residues Asn-98 and Asn-143 are each glycosylated (N-linked (GlcNAc...) asparagine). The cysteines at positions 99 and 272 are disulfide-linked. Positions 172 and 173 each coordinate glycine. The N-linked (GlcNAc...) asparagine glycan is linked to Asn-215. Glu-271 contributes to the glycine binding site. An N-linked (GlcNAc...) asparagine glycan is attached at Asn-274. A glycine-binding site is contributed by Asp-307. N-linked (GlcNAc...) asparagine glycosylation is present at Asn-333. A helical transmembrane segment spans residues 418-439 (LAIISFQALCMLLDFLSMLVVY). The Cytoplasmic portion of the chain corresponds to 440–451 (RFRKAKSIRASG). A helical transmembrane segment spans residues 452–474 (LILLETILFGSLLLYFPVVILYF). Residues 475-478 (EPST) are Extracellular-facing. The chain crosses the membrane as a helical span at residues 479–501 (FRCILLRWVRLLGFATVYGTVTL). An intrachain disulfide couples Cys-481 to Cys-573. Residues 502–525 (KLHRVLKVFLSRTAQRIPYMTGGR) lie on the Cytoplasmic side of the membrane. The chain crosses the membrane as a helical span at residues 526 to 547 (VMRMLAVILLVVFWFLVGWTSS). Over 548-576 (VCQNLERHISLIGQGRTSDHLIFSMCLVE) the chain is Extracellular. The helical transmembrane segment at 577–597 (RWDYMTAAAEFLFLLWGVYLC) threads the bilayer. Topologically, residues 598–611 (YAVRTVPSAFHEPR) are cytoplasmic. A helical membrane pass occupies residues 612–633 (YMAVAVHNELIISAIFHTIRFV). At 634-642 (LASRLQSDW) the chain is on the extracellular side. The chain crosses the membrane as a helical span at residues 643-664 (MLMLYFAHTHLTVTVTIGLLLI). Residues 665–1216 (PKFSHSSNNP…NEEVRLARKV (552 aa)) lie on the Cytoplasmic side of the membrane. 3 positions are modified to phosphoserine: Ser-694, Ser-705, and Ser-708. Disordered stretches follow at residues 757–875 (RITE…ESVP) and 911–1000 (KEKT…HMKD). A compositionally biased stretch (basic and acidic residues) spans 769-781 (CSKEDKDGGEHGS). Residue Lys-774 forms a Glycyl lysine isopeptide (Lys-Gly) (interchain with G-Cter in ubiquitin) linkage. A compositionally biased stretch (polar residues) spans 864–873 (EDSQAVSTES). Ser-866 carries the post-translational modification Phosphoserine. The segment covering 926–944 (VEERAKAQKALPRERETNR) has biased composition (basic and acidic residues). Polar residues-rich tracts occupy residues 945-963 (KYSN…PNSS) and 980-991 (QRANPTTANSDL). At Ser-947 the chain carries Phosphoserine. Residues 1007–1011 (VCPWE) carry the VCPWE motif 1 motif. The interval 1038 to 1072 (ERNPTFSLKEKSHPKPKAADLCQQSNPKSVDKAEV) is disordered. The residue at position 1066 (Ser-1066) is a Phosphoserine. The VCPWE motif 2 signature appears at 1072-1076 (VCPWE). Ser-1081 bears the Phosphoserine mark. Residues 1128–1167 (SKVENENLNQLGEQEKKTSSSERNVPDSHNSSNNFQPPLM) are disordered. Residues 1140–1153 (EQEKKTSSSERNVP) are compositionally biased toward basic and acidic residues. Positions 1154 to 1163 (DSHNSSNNFQ) are enriched in polar residues. A VCPWE motif 3 motif is present at residues 1172–1176 (VCPWE).

Belongs to the G-protein coupled receptor 3 family. In terms of assembly, homodimer. Associates with the RGS7-GNB5 complex, promoting its localization to the cell membrane and regulating its GTPase activator activity. Interacts (via VCPWE motifs) with GNAO1. Interacts with GPC4. Interacts with EGFLAM.

It localises to the cell membrane. It is found in the postsynaptic cell membrane. Its subcellular location is the presynaptic cell membrane. The protein resides in the nucleus. Metabotropic receptor for glycine that controls synapse formation and function in the brain. Acts as an atypical G-protein coupled receptor that recruits and regulates the RGS7-GNB5 complex instead of activating G proteins. In absence of glycine ligand, promotes the GTPase activator activity of RGS7, increasing the GTPase activity of G protein alpha subunits, thereby driving them into their inactive GDP-bound form. Glycine-binding changes the conformation of the intracellular surface, inhibiting the GTPase activator activity of the RGS7-GNB5 complex, promoting G protein alpha subunits into their active GTP-bound form and regulating cAMP levels. Also able to bind taurine, a compound closely related to glycine, but with a two-fold lower affinity. Glycine receptor-dependent regulation of cAMP controls key ion channels, kinases and neurotrophic factors involved in neuronal excitability and synaptic transmission. Plays a pivotal role in regulating mood and cognition via its ability to regulate neuronal excitability in L2/L3 pyramidal neurons of the prefrontal cortex. Also involved in spatial learning by regulating hippocampal CA1 neuronal excitability. Acts as a synaptic organizer in the hippocampus, required for proper mossy fiber-CA3 neurocircuitry establishment, structure and function: induces presynaptic differentiation in contacting axons via its interaction with GPC4. In addition to glycine, may also act as a receptor for osteocalcin (BGLAP) hormone: osteocalcin-binding initiates a signaling response that prevents neuronal apoptosis in the hippocampus and regulates the synthesis of neurotransmitters. The protein is Metabotropic glycine receptor (GPR158) of Bos taurus (Bovine).